The chain runs to 255 residues: Cytochrome c oxidase subunit 2 (255 aa).

At 1 to 42 the chain is on the mitochondrial intermembrane side; it reads MKFFFFSFINYKVLNDAARPWQIGFQDPATPIMEGIVNLHHD. The chain crosses the membrane as a helical span at residues 43–63; it reads IIFFLIIIIIFVSWILFRTLF. The Mitochondrial matrix segment spans residues 64 to 83; the sequence is LFNSKTNPVAYNFSHGTFIE. A helical transmembrane segment spans residues 84–104; that stretch reads LLWTLTPSLVLIGIAVPSFAL. The Mitochondrial intermembrane portion of the chain corresponds to 105–255; the sequence is LYSIDEIIDP…IRWVQNKILD (151 aa). Cu cation contacts are provided by histidine 187, cysteine 222, glutamate 224, cysteine 226, histidine 230, and methionine 233. Glutamate 224 is a Mg(2+) binding site.

The protein belongs to the cytochrome c oxidase subunit 2 family. In terms of assembly, component of the cytochrome c oxidase (complex IV, CIV), a multisubunit enzyme composed of a catalytic core of 3 subunits and several supernumerary subunits. The complex exists as a monomer or a dimer and forms supercomplexes (SCs) in the inner mitochondrial membrane with ubiquinol-cytochrome c oxidoreductase (cytochrome b-c1 complex, complex III, CIII). Cu cation is required as a cofactor.

The protein resides in the mitochondrion inner membrane. It carries out the reaction 4 Fe(II)-[cytochrome c] + O2 + 8 H(+)(in) = 4 Fe(III)-[cytochrome c] + 2 H2O + 4 H(+)(out). In terms of biological role, component of the cytochrome c oxidase, the last enzyme in the mitochondrial electron transport chain which drives oxidative phosphorylation. The respiratory chain contains 3 multisubunit complexes succinate dehydrogenase (complex II, CII), ubiquinol-cytochrome c oxidoreductase (cytochrome b-c1 complex, complex III, CIII) and cytochrome c oxidase (complex IV, CIV), that cooperate to transfer electrons derived from NADH and succinate to molecular oxygen, creating an electrochemical gradient over the inner membrane that drives transmembrane transport and the ATP synthase. Cytochrome c oxidase is the component of the respiratory chain that catalyzes the reduction of oxygen to water. Electrons originating from reduced cytochrome c in the intermembrane space (IMS) are transferred via the dinuclear copper A center (CU(A)) of subunit 2 and heme A of subunit 1 to the active site in subunit 1, a binuclear center (BNC) formed by heme A3 and copper B (CU(B)). The BNC reduces molecular oxygen to 2 water molecules using 4 electrons from cytochrome c in the IMS and 4 protons from the mitochondrial matrix. The chain is Cytochrome c oxidase subunit 2 (COX2) from Cyanidium caldarium (Red alga).